A 126-amino-acid chain; its full sequence is Fluoride-specific ion channel FluC (126 aa).

4 consecutive transmembrane segments (helical) span residues 4–24 (PLLSIALGSVLGAWLRWLLGL), 33–53 (IPLGTVTVNLAGGFIIGFAMA), 67–87 (FVITGFCGALTTFSTFSIEIV), and 97–117 (MAMLAISIHLIGSLIFTCLGL). Positions 74 and 77 each coordinate Na(+).

Belongs to the fluoride channel Fluc/FEX (TC 1.A.43) family.

The protein localises to the cell inner membrane. The enzyme catalyses fluoride(in) = fluoride(out). Na(+) is not transported, but it plays an essential structural role and its presence is essential for fluoride channel function. Functionally, fluoride-specific ion channel. Important for reducing fluoride concentration in the cell, thus reducing its toxicity. The chain is Fluoride-specific ion channel FluC from Acinetobacter baumannii (strain ACICU).